A 1071-amino-acid chain; its full sequence is ATP-dependent helicase/deoxyribonuclease subunit B (1071 aa).

The protein belongs to the helicase family. AddB/RexB type 2 subfamily. As to quaternary structure, heterodimer of AddA and RexB. It depends on Mg(2+) as a cofactor.

In terms of biological role, the heterodimer acts as both an ATP-dependent DNA helicase and an ATP-dependent, dual-direction single-stranded exonuclease. Recognizes the chi site generating a DNA molecule suitable for the initiation of homologous recombination. This subunit has 5' -&gt; 3' nuclease activity but not helicase activity. In Streptococcus pyogenes serotype M1, this protein is ATP-dependent helicase/deoxyribonuclease subunit B.